We begin with the raw amino-acid sequence, 446 residues long: GTPase Der (446 aa).

2 EngA-type G domains span residues 2–166 and 179–354; these read TVVA…PEAP and IRVS…RQYN. GTP is bound by residues 8–15, 55–59, 118–121, 185–192, 232–236, and 297–300; these read GRPNVGKS, DTAGF, NKID, DTAGI, and NKWD. The 86-residue stretch at 355–440 folds into the KH-like domain; that stretch reads QRVTTGIVNR…PIRLIFRPRQ (86 aa).

It belongs to the TRAFAC class TrmE-Era-EngA-EngB-Septin-like GTPase superfamily. EngA (Der) GTPase family. In terms of assembly, associates with the 50S ribosomal subunit.

GTPase that plays an essential role in the late steps of ribosome biogenesis. The sequence is that of GTPase Der from Syntrophobacter fumaroxidans (strain DSM 10017 / MPOB).